Consider the following 143-residue polypeptide: Large ribosomal subunit protein uL11 (143 aa).

The protein belongs to the universal ribosomal protein uL11 family. In terms of assembly, part of the ribosomal stalk of the 50S ribosomal subunit. Interacts with L10 and the large rRNA to form the base of the stalk. L10 forms an elongated spine to which L12 dimers bind in a sequential fashion forming a multimeric L10(L12)X complex. One or more lysine residues are methylated.

Forms part of the ribosomal stalk which helps the ribosome interact with GTP-bound translation factors. This Rhizobium johnstonii (strain DSM 114642 / LMG 32736 / 3841) (Rhizobium leguminosarum bv. viciae) protein is Large ribosomal subunit protein uL11.